The following is a 356-amino-acid chain: Probable L-asparaginase 4 (356 aa).

A signal peptide spans 1–22 (MWGFIVTCGIFLVLLCQLRLLS). Residues 36-356 (PNVTVFAMGG…RDIEGLFSIK (321 aa)) form the Asparaginase/glutaminase domain. Asn37 is a glycosylation site (N-linked (GlcNAc...) asparagine). The active-site O-isoaspartyl threonine intermediate is the Thr46. Residue Asn52 is glycosylated (N-linked (GlcNAc...) asparagine). Substrate contacts are provided by residues Ser93 and 126 to 127 (TD). An N-linked (GlcNAc...) asparagine glycan is attached at Asn176.

The protein belongs to the asparaginase 1 family.

The protein resides in the secreted. The protein localises to the cell wall. The catalysed reaction is L-asparagine + H2O = L-aspartate + NH4(+). This is Probable L-asparaginase 4 from Schizosaccharomyces pombe (strain 972 / ATCC 24843) (Fission yeast).